The sequence spans 110 residues: UPF0060 membrane protein Ajs_2087 (110 aa).

A run of 4 helical transmembrane segments spans residues 7-27 (LALFLLTAVAEIVGCYLPWLW), 33-53 (SAWLLVPAAASLALFAWLLTL), 63-83 (AAYGGVYVAVALVWLWTVDGV), and 86-106 (GPWDWLGVAVTLCGMAIIAFA).

The protein belongs to the UPF0060 family.

The protein resides in the cell inner membrane. The polypeptide is UPF0060 membrane protein Ajs_2087 (Acidovorax sp. (strain JS42)).